The sequence spans 549 residues: Hydroxylamine reductase (549 aa).

4 residues coordinate [4Fe-4S] cluster: cysteine 3, cysteine 6, cysteine 15, and cysteine 21. Residues histidine 244, glutamate 268, cysteine 313, cysteine 405, cysteine 433, cysteine 458, glutamate 492, and lysine 494 each coordinate hybrid [4Fe-2O-2S] cluster. Cysteine 405 is subject to Cysteine persulfide.

The protein belongs to the HCP family. [4Fe-4S] cluster is required as a cofactor. The cofactor is hybrid [4Fe-2O-2S] cluster.

The protein resides in the cytoplasm. The enzyme catalyses A + NH4(+) + H2O = hydroxylamine + AH2 + H(+). In terms of biological role, catalyzes the reduction of hydroxylamine to form NH(3) and H(2)O. This Crocosphaera subtropica (strain ATCC 51142 / BH68) (Cyanothece sp. (strain ATCC 51142)) protein is Hydroxylamine reductase.